Consider the following 123-residue polypeptide: Probable ketoamine kinase in tonB 3'region (123 aa).

Asp-26 functions as the Proton acceptor in the catalytic mechanism.

The protein belongs to the fructosamine kinase family.

Functionally, ketoamine kinase that phosphorylates ketoamines on the third carbon of the sugar moiety to generate ketoamine 3-phosphate. This is Probable ketoamine kinase in tonB 3'region from Klebsiella pneumoniae.